A 550-amino-acid polypeptide reads, in one-letter code: Silent protein UshA(0) (550 aa).

Residues 1-25 (MKFLKRGVALALLAAFALTTQPAQA) form the signal peptide. Positions 41, 43, 84, 116, 217, 252, and 254 each coordinate a divalent metal cation. Residues cysteine 258 and cysteine 275 are joined by a disulfide bond. Residues phenylalanine 429 and 498 to 504 (FNATGGD) contribute to the substrate site.

Belongs to the 5'-nucleotidase family. It depends on a divalent metal cation as a cofactor.

The protein resides in the periplasm. The protein is Silent protein UshA(0) (ushA) of Salmonella typhimurium (strain LT2 / SGSC1412 / ATCC 700720).